A 284-amino-acid chain; its full sequence is ATP phosphoribosyltransferase (284 aa).

Belongs to the ATP phosphoribosyltransferase family. Long subfamily. Mg(2+) serves as cofactor.

It is found in the cytoplasm. It catalyses the reaction 1-(5-phospho-beta-D-ribosyl)-ATP + diphosphate = 5-phospho-alpha-D-ribose 1-diphosphate + ATP. It functions in the pathway amino-acid biosynthesis; L-histidine biosynthesis; L-histidine from 5-phospho-alpha-D-ribose 1-diphosphate: step 1/9. Its activity is regulated as follows. Feedback inhibited by histidine. In terms of biological role, catalyzes the condensation of ATP and 5-phosphoribose 1-diphosphate to form N'-(5'-phosphoribosyl)-ATP (PR-ATP). Has a crucial role in the pathway because the rate of histidine biosynthesis seems to be controlled primarily by regulation of HisG enzymatic activity. This is ATP phosphoribosyltransferase from Pseudarthrobacter chlorophenolicus (strain ATCC 700700 / DSM 12829 / CIP 107037 / JCM 12360 / KCTC 9906 / NCIMB 13794 / A6) (Arthrobacter chlorophenolicus).